A 366-amino-acid polypeptide reads, in one-letter code: UPF0329 protein ECU01_0130/ECU01_1480/ECU08_0060 (366 aa).

Residues 325 to 366 (IRKEEKRIRKEEERAKNEEELLRMVESEEGKSGEGEEGCRRG) form a disordered region.

The protein belongs to the UPF0329 family.

This is UPF0329 protein ECU01_0130/ECU01_1480/ECU08_0060 from Encephalitozoon cuniculi (strain GB-M1) (Microsporidian parasite).